A 167-amino-acid chain; its full sequence is NADH-quinone oxidoreductase subunit B (167 aa).

The [4Fe-4S] cluster site is built by C40, C41, C105, and C134.

The protein belongs to the complex I 20 kDa subunit family. As to quaternary structure, NDH-1 is composed of 14 different subunits. Subunits NuoB, C, D, E, F, and G constitute the peripheral sector of the complex. [4Fe-4S] cluster is required as a cofactor.

The protein resides in the cell inner membrane. It catalyses the reaction a quinone + NADH + 5 H(+)(in) = a quinol + NAD(+) + 4 H(+)(out). In terms of biological role, NDH-1 shuttles electrons from NADH, via FMN and iron-sulfur (Fe-S) centers, to quinones in the respiratory chain. The immediate electron acceptor for the enzyme in this species is believed to be ubiquinone. Couples the redox reaction to proton translocation (for every two electrons transferred, four hydrogen ions are translocated across the cytoplasmic membrane), and thus conserves the redox energy in a proton gradient. The chain is NADH-quinone oxidoreductase subunit B from Campylobacter jejuni subsp. jejuni serotype O:6 (strain 81116 / NCTC 11828).